The primary structure comprises 469 residues: Putative dipeptidase SAUSA300_1697 (469 aa).

His-84 lines the Zn(2+) pocket. Asp-86 is an active-site residue. Asp-115 contributes to the Zn(2+) binding site. The active-site Proton acceptor is the Glu-149. The Zn(2+) site is built by Glu-150, Asp-173, and His-440.

Belongs to the peptidase M20A family. It depends on Zn(2+) as a cofactor.

In Staphylococcus aureus (strain USA300), this protein is Putative dipeptidase SAUSA300_1697.